A 502-amino-acid chain; its full sequence is Carbon catabolite-derepressing protein kinase (502 aa).

One can recognise a Protein kinase domain in the interval 14 to 269 (YYLGKILGVG…IGEIRKHSWF (256 aa)). ATP contacts are provided by residues 20-28 (LGVGTFAKV) and Lys43. Asp140 acts as the Proton acceptor in catalysis. A Phosphothreonine; by autocatalysis modification is found at Thr173. The UBA domain maps to 290–330 (MIDEDTLRDVVKLGYDKDHVCESLCNRLQNEETVAYYLLLD). In terms of domain architecture, KA1 spans 453–501 (NSRLPAVIKFEIQLYKTKDDKYLLDMQRVTGPQLLFLEFCAAFLTNLRV).

Belongs to the protein kinase superfamily. CAMK Ser/Thr protein kinase family. SNF1 subfamily.

It carries out the reaction L-seryl-[protein] + ATP = O-phospho-L-seryl-[protein] + ADP + H(+). The catalysed reaction is L-threonyl-[protein] + ATP = O-phospho-L-threonyl-[protein] + ADP + H(+). Essential for release from glucose repression. The sequence is that of Carbon catabolite-derepressing protein kinase (RKIN1) from Secale cereale (Rye).